The chain runs to 314 residues: Methenyltetrahydromethanopterin cyclohydrolase (314 aa).

It belongs to the MCH family.

It is found in the cytoplasm. It catalyses the reaction 5,10-methenyl-5,6,7,8-tetrahydromethanopterin + H2O = N(5)-formyl-5,6,7,8-tetrahydromethanopterin + H(+). It functions in the pathway one-carbon metabolism; methanogenesis from CO(2); 5,10-methenyl-5,6,7,8-tetrahydromethanopterin from CO(2): step 3/3. Its function is as follows. Catalyzes the reversible interconversion of 5-formyl-H(4)MPT to methenyl-H(4)MPT(+). This chain is Methenyltetrahydromethanopterin cyclohydrolase, found in Methanoregula boonei (strain DSM 21154 / JCM 14090 / 6A8).